A 330-amino-acid polypeptide reads, in one-letter code: 4-hydroxythreonine-4-phosphate dehydrogenase (330 aa).

Thr-133 serves as a coordination point for substrate. A divalent metal cation contacts are provided by His-161, His-206, and His-261. Substrate contacts are provided by Lys-269, Asn-278, and Arg-287.

This sequence belongs to the PdxA family. As to quaternary structure, homodimer. The cofactor is Zn(2+). Requires Mg(2+) as cofactor. It depends on Co(2+) as a cofactor.

Its subcellular location is the cytoplasm. The enzyme catalyses 4-(phosphooxy)-L-threonine + NAD(+) = 3-amino-2-oxopropyl phosphate + CO2 + NADH. It functions in the pathway cofactor biosynthesis; pyridoxine 5'-phosphate biosynthesis; pyridoxine 5'-phosphate from D-erythrose 4-phosphate: step 4/5. In terms of biological role, catalyzes the NAD(P)-dependent oxidation of 4-(phosphooxy)-L-threonine (HTP) into 2-amino-3-oxo-4-(phosphooxy)butyric acid which spontaneously decarboxylates to form 3-amino-2-oxopropyl phosphate (AHAP). The polypeptide is 4-hydroxythreonine-4-phosphate dehydrogenase (Xylella fastidiosa (strain Temecula1 / ATCC 700964)).